Consider the following 568-residue polypeptide: Polyprotein P2A (568 aa).

Helical transmembrane passes span 10–30 (KSVMLMSRMSWSKLALLISVA) and 41–61 (TLICMGILVSVVLNWIVCAVC). Positions 129-326 (VENSRLQPLE…TVENSELYPD (198 aa)) constitute a Peptidase S39 domain. Catalysis depends on for protease activity residues histidine 176, aspartate 209, and serine 276. The residue at position 339 (threonine 339) is a Phosphothreonine; by host. Phosphoserine; by host is present on serine 390. 2 disordered regions span residues 403 to 435 (LNYQRAGSLRGSPPLANLSSTRATSGVTKESSI) and 469 to 568 (SSQN…ATSK). Polar residues-rich tracts occupy residues 419–435 (NLSSTRATSGVTKESSI) and 469–478 (SSQNSKSSLG). A compositionally biased stretch (basic and acidic residues) spans 481–502 (ADRKQKSDRSSSKPEGLKESKR). The segment covering 507–516 (NWQSLTSKPS) has biased composition (polar residues). Over residues 539–549 (KSKRSRTRGKS) the composition is skewed to basic residues. Polar residues predominate over residues 554–568 (VPASPSPKSGSATSK).

It localises to the host membrane. Functionally, responsible for cleavages of polyprotein P2A and replicase polyprotein P2AB. Its function is as follows. Covalently attached to the 5' extremity of the genomic and subgenomic RNAs. It may serve as a primer for the replicase. This is Polyprotein P2A from Cocksfoot mottle virus (isolate Dactylis glomerata/Norway/CfMV-NO/1995) (CfMV).